Consider the following 95-residue polypeptide: Small ribosomal subunit protein bS16 (95 aa).

Belongs to the bacterial ribosomal protein bS16 family.

This Streptococcus pneumoniae (strain CGSP14) protein is Small ribosomal subunit protein bS16.